A 218-amino-acid polypeptide reads, in one-letter code: Insulin-induced gene 2 protein (218 aa).

Topologically, residues 1–21 are cytoplasmic; sequence MGETDNAPRGPPSFLPHKMNL. The chain crosses the membrane as a helical span at residues 22-44; the sequence is LLRGLLLFLIGVFLALVLNLLQV. The Lumenal portion of the chain corresponds to 45–63; it reads QRNVTLFPPDVLSSLFSSA. The helical transmembrane segment at 64–81 threads the bilayer; it reads WWVPLCCGTAAAAIGLLY. Over 82 to 96 the chain is Cytoplasmic; sequence PCIDRHLGEPHKFKR. The chain crosses the membrane as a helical span at residues 97–119; that stretch reads EWSSVMRCVAVFVGINHASAKVD. Over 120–122 the chain is Lumenal; that stretch reads FAN. A helical membrane pass occupies residues 123 to 141; the sequence is NTQLSLTLAALSIGLWWTF. The Cytoplasmic segment spans residues 142-146; that stretch reads DRSRS. A helical transmembrane segment spans residues 147–168; the sequence is GLGLGIGISFFATVVSQLLVYN. At 169–182 the chain is on the lumenal side; the sequence is GVYEYTAPDFLYVR. The chain crosses the membrane as a helical span at residues 183–200; sequence SWLPCIFFAGGITMGNIG. Topologically, residues 201–218 are cytoplasmic; it reads RQLEMYERLALVEKSHRD. A KxHxx motif is present at residues 212–218; that stretch reads VEKSHRD.

It belongs to the INSIG family. In terms of assembly, interacts with scap; interaction is direct and only takes place in the presence of sterols; it prevents interaction between scap and the coat protein complex II (COPII). Associates with the SCAP-SREBP complex; association is mediated via its interaction with scap and only takes place in the presence of sterols.

The protein localises to the endoplasmic reticulum membrane. In terms of biological role, oxysterol-binding protein that mediates feedback control of cholesterol synthesis by controlling both endoplasmic reticulum to Golgi transport of scap and degradation of hmgcr. Acts as a negative regulator of cholesterol biosynthesis by mediating the retention of the SCAP-SREBP complex in the endoplasmic reticulum, thereby blocking the processing of sterol regulatory element-binding proteins (SREBPs). Binds oxysterol, including 22-hydroxycholesterol, 24-hydroxycholesterol, 25-hydroxycholesterol and 27-hydroxycholesterol, regulating interaction with scap and retention of the SCAP-SREBP complex in the endoplasmic reticulum. In presence of oxysterol, interacts with scap, retaining the SCAP-SREBP complex in the endoplasmic reticulum, thereby preventing scap from escorting SREBPs to the Golgi. Sterol deprivation reduce oxysterol-binding, disrupting the interaction between insig2 and scap, thereby promoting Golgi transport of the SCAP-SREBP complex, followed by processing and nuclear translocation of SREBPs. Also regulates cholesterol synthesis by regulating degradation of hmgcr. This chain is Insulin-induced gene 2 protein, found in Xenopus tropicalis (Western clawed frog).